The following is a 192-amino-acid chain: Casparian strip membrane protein 4 (192 aa).

The Cytoplasmic portion of the chain corresponds to 1–29 (MTKDVVIEHGESSKAPLVPAPVAAGVGRA). A helical membrane pass occupies residues 30–50 (VSIADVFLRFLSIVATIASAI). Residues 51 to 79 (SMGTTNETLPFFTQFIQFEAKYSDLPSFT) lie on the Extracellular side of the membrane. Asn56 is a glycosylation site (N-linked (GlcNAc...) asparagine). Residues 80–100 (FFVAANAVVCTYLVLSIPLSI) form a helical membrane-spanning segment. The Cytoplasmic segment spans residues 101–112 (VHIIRPRARYSR). A helical transmembrane segment spans residues 113–133 (LILVFFDAVMLALLTAGASAA). Residues 134-166 (AAIVYLAHKGNVRANWFAICQQFDSFCERISGS) are Extracellular-facing. The helical transmembrane segment at 167–187 (LIGSFAAMVLLIVLIFLSAFA) threads the bilayer. The Cytoplasmic segment spans residues 188–192 (LARRH).

Belongs to the Casparian strip membrane proteins (CASP) family. As to quaternary structure, homodimer and heterodimers.

It localises to the cell membrane. Regulates membrane-cell wall junctions and localized cell wall deposition. Required for establishment of the Casparian strip membrane domain (CSD) and the subsequent formation of Casparian strips, a cell wall modification of the root endodermis that determines an apoplastic barrier between the intraorganismal apoplasm and the extraorganismal apoplasm and prevents lateral diffusion. The sequence is that of Casparian strip membrane protein 4 from Sorghum bicolor (Sorghum).